Here is a 315-residue protein sequence, read N- to C-terminus: Homoserine kinase (315 aa).

97-107 (PPARGLGSSAT) contacts ATP.

It belongs to the GHMP kinase family. Homoserine kinase subfamily.

The protein localises to the cytoplasm. The catalysed reaction is L-homoserine + ATP = O-phospho-L-homoserine + ADP + H(+). It participates in amino-acid biosynthesis; L-threonine biosynthesis; L-threonine from L-aspartate: step 4/5. In terms of biological role, catalyzes the ATP-dependent phosphorylation of L-homoserine to L-homoserine phosphate. In Prochlorococcus marinus (strain MIT 9215), this protein is Homoserine kinase.